The sequence spans 89 residues: UPF0147 protein Msed_2034 (89 aa).

Belongs to the UPF0147 family.

In Metallosphaera sedula (strain ATCC 51363 / DSM 5348 / JCM 9185 / NBRC 15509 / TH2), this protein is UPF0147 protein Msed_2034.